An 888-amino-acid polypeptide reads, in one-letter code: MGQSVLRAVFFLVLGLLGHSHGGFPNTISIGGLFMRNTVQEHSAFRFAVQLYNTNQNTTEKPFHLNYHVDHLDSSNSFSVTNAFCSQFSRGVYAIFGFYDQMSMNTLTSFCGALHTSFVTPSFPTDADVQFVIQMRPALKGAILSLLSYYKWEKFVYLYDTERGFSVLQAIMEAAVQNNWQVTARSVGNIKDVQEFRRIIEEMDRRQEKRYLIDCEVERINTILEQVVILGKHSRGYHYMLANLGFTDILLERVMHGGANITGFQIVNNENPMVQQFIQRWVRLDEREFPEAKNAPLKYTSALTHDAILVIAEAFRYLRRQRVDVSRRGSAGDCLANPAVPWSQGIDIERALKMVQVQGMTGNIQFDTYGRRTNYTIDVYEMKVSGSRKAGYWNEYERFVPFSDQQISNDSSSSENRTIVVTTILESPYVMYKKNHEQLEGNERYEGYCVDLAYEIAKHVRIKYKLSIVGDGKYGARDPETKIWNGMVGELVYGRADIAVAPLTITLVREEVIDFSKPFMSLGISIMIKKPQKSKPGVFSFLDPLAYEIWMCIVFAYIGVSVVLFLVSRFSPYEWHLEDNNEEPRDPQSPPDPPNEFGIFNSLWFSLGAFMQQGCDISPRSLSGRIVGGVWWFFTLIIISSYTANLAAFLTVERMVSPIESAEDLAKQTEIAYGTLDSGSTKEFFRRSKIAVYEKMWSYMKSAEPSVFTKTTADGVARVRKSKGKFAFLLESTMNEYIEQRKPCDTMKVGGNLDSKGYGVATPKGSALGNAVNLAVLKLNEQGLLDKLKNKWWYDKGECGSGGGDSKDKTSALSLSNVAGVFYILVGGLGLAMMVALIEFCYKSRAESKRMKLTKNTQNFKPAPATNTQNYATYREGYNVYGTESVKI.

Positions 1-22 (MGQSVLRAVFFLVLGLLGHSHG) are cleaved as a signal peptide. At 23 to 546 (GFPNTISIGG…GVFSFLDPLA (524 aa)) the chain is on the extracellular side. Asn57, Asn260, Asn374, Asn409, and Asn416 each carry an N-linked (GlcNAc...) asparagine glycan. A disulfide bridge connects residues Cys85 and Cys334. L-glutamate-binding residues include Pro502, Thr504, and Arg509. Residues 547 to 567 (YEIWMCIVFAYIGVSVVLFLV) traverse the membrane as a helical segment. The Cytoplasmic segment spans residues 568–596 (SRFSPYEWHLEDNNEEPRDPQSPPDPPNE). An intramembrane region (helical; Pore-forming) is located at residues 597–612 (FGIFNSLWFSLGAFMQ). The stretch at 613–615 (QGC) is an intramembrane region. A lipid anchor (S-palmitoyl cysteine) is attached at Cys615. Residues 616-621 (DISPRS) lie on the Cytoplasmic side of the membrane. A helical transmembrane segment spans residues 622–642 (LSGRIVGGVWWFFTLIIISSY). Over 643–817 (TANLAAFLTV…DKTSALSLSN (175 aa)) the chain is Extracellular. Residues Ser680, Thr681, and Glu731 each contribute to the L-glutamate site. The cysteines at positions 744 and 799 are disulfide-linked. The chain crosses the membrane as a helical span at residues 818–838 (VAGVFYILVGGLGLAMMVALI). Topologically, residues 839–888 (EFCYKSRAESKRMKLTKNTQNFKPAPATNTQNYATYREGYNVYGTESVKI) are cytoplasmic. Residue Cys841 is the site of S-palmitoyl cysteine attachment. Phosphotyrosine occurs at positions 871 and 881.

The protein belongs to the glutamate-gated ion channel (TC 1.A.10.1) family. GRIA3 subfamily. Homotetramer or heterotetramer of pore-forming glutamate receptor subunits. Tetramers may be formed by the dimerization of dimers. Interacts with PICK1, GRIP1 and GRIP2. Found in a complex with GRIA1, GRIA2, GRIA4, CNIH2, CNIH3, CACNG2, CACNG3, CACNG4, CACNG5, CACNG7 and CACNG8. Interacts with CACNG5. Found in a complex with GRIA1, GRIA2, GRIA4, DLG4, CACNG8 and CNIH2.

It localises to the cell membrane. Its subcellular location is the postsynaptic cell membrane. The protein localises to the postsynaptic density membrane. The enzyme catalyses Ca(2+)(in) = Ca(2+)(out). Functionally, ionotropic glutamate receptor that functions as a ligand-gated cation channel, gated by L-glutamate and glutamatergic agonists such as alpha-amino-3-hydroxy-5-methyl-4-isoxazolepropionic acid (AMPA), quisqualic acid, and kainic acid. L-glutamate acts as an excitatory neurotransmitter at many synapses in the central nervous system and plays an important role in fast excitatory synaptic transmission by inducing long-term potentiation. Binding of the excitatory neurotransmitter L-glutamate induces a conformation change, leading to the opening of the cation channel, and thereby converts the chemical signal to an electrical impulse upon entry of calcium. The receptor then desensitizes rapidly and enters a transient inactive state, characterized by the presence of bound agonist. In the presence of CACNG8, shows resensitization which is characterized by a delayed accumulation of current flux upon continued application of glutamate. This is Glutamate receptor 3 from Rattus norvegicus (Rat).